We begin with the raw amino-acid sequence, 29 residues long: MLTVKIINGDGAIDKHLTLNEKEAFKKTI.

This is an uncharacterized protein from Haloarcula hispanica (His1V).